The following is an 81-amino-acid chain: Acyl carrier protein (81 aa).

The region spanning 2–77 is the Carrier domain; the sequence is ASVEEKVKQI…DAVDYITAHA (76 aa). Ser-37 bears the O-(pantetheine 4'-phosphoryl)serine mark.

Belongs to the acyl carrier protein (ACP) family. 4'-phosphopantetheine is transferred from CoA to a specific serine of apo-ACP by AcpS. This modification is essential for activity because fatty acids are bound in thioester linkage to the sulfhydryl of the prosthetic group.

The protein resides in the cytoplasm. The protein operates within lipid metabolism; fatty acid biosynthesis. Functionally, carrier of the growing fatty acid chain in fatty acid biosynthesis. The chain is Acyl carrier protein from Koribacter versatilis (strain Ellin345).